The chain runs to 166 residues: UPF0179 protein Tneu_1978 (166 aa).

Residues 140-166 (PPSPSKSGGATASRDPSRAPPSRPLSK) form a disordered region. Residues 157 to 166 (RAPPSRPLSK) are compositionally biased toward pro residues.

Belongs to the UPF0179 family.

This chain is UPF0179 protein Tneu_1978, found in Pyrobaculum neutrophilum (strain DSM 2338 / JCM 9278 / NBRC 100436 / V24Sta) (Thermoproteus neutrophilus).